The chain runs to 444 residues: Tubulin beta chain (444 aa).

Gln-11, Glu-69, Ser-138, Gly-142, Thr-143, Gly-144, Asn-204, and Asn-226 together coordinate GTP. Glu-69 is a binding site for Mg(2+).

Belongs to the tubulin family. In terms of assembly, dimer of alpha and beta chains. A typical microtubule is a hollow water-filled tube with an outer diameter of 25 nm and an inner diameter of 15 nM. Alpha-beta heterodimers associate head-to-tail to form protofilaments running lengthwise along the microtubule wall with the beta-tubulin subunit facing the microtubule plus end conferring a structural polarity. Microtubules usually have 13 protofilaments but different protofilament numbers can be found in some organisms and specialized cells. Mg(2+) serves as cofactor.

It is found in the cytoplasm. It localises to the cytoskeleton. Its function is as follows. Tubulin is the major constituent of microtubules, a cylinder consisting of laterally associated linear protofilaments composed of alpha- and beta-tubulin heterodimers. Microtubules grow by the addition of GTP-tubulin dimers to the microtubule end, where a stabilizing cap forms. Below the cap, tubulin dimers are in GDP-bound state, owing to GTPase activity of alpha-tubulin. The protein is Tubulin beta chain of Trichuris trichiura (Whipworm).